Reading from the N-terminus, the 96-residue chain is UPF0251 protein Spea_3639 (96 aa).

Belongs to the UPF0251 family.

This chain is UPF0251 protein Spea_3639, found in Shewanella pealeana (strain ATCC 700345 / ANG-SQ1).